The primary structure comprises 375 residues: Queuine tRNA-ribosyltransferase (375 aa).

The Proton acceptor role is filled by Asp90. Residues Asp90–Phe94, Asp144, Gln193, and Gly220 contribute to the substrate site. Positions Gly251–Asp257 are RNA binding. The active-site Nucleophile is Asp270. The tract at residues Thr275–Arg279 is RNA binding; important for wobble base 34 recognition. Cys308, Cys310, Cys313, and His339 together coordinate Zn(2+).

This sequence belongs to the queuine tRNA-ribosyltransferase family. As to quaternary structure, homodimer. Within each dimer, one monomer is responsible for RNA recognition and catalysis, while the other monomer binds to the replacement base PreQ1. Requires Zn(2+) as cofactor.

The enzyme catalyses 7-aminomethyl-7-carbaguanine + guanosine(34) in tRNA = 7-aminomethyl-7-carbaguanosine(34) in tRNA + guanine. Its pathway is tRNA modification; tRNA-queuosine biosynthesis. In terms of biological role, catalyzes the base-exchange of a guanine (G) residue with the queuine precursor 7-aminomethyl-7-deazaguanine (PreQ1) at position 34 (anticodon wobble position) in tRNAs with GU(N) anticodons (tRNA-Asp, -Asn, -His and -Tyr). Catalysis occurs through a double-displacement mechanism. The nucleophile active site attacks the C1' of nucleotide 34 to detach the guanine base from the RNA, forming a covalent enzyme-RNA intermediate. The proton acceptor active site deprotonates the incoming PreQ1, allowing a nucleophilic attack on the C1' of the ribose to form the product. After dissociation, two additional enzymatic reactions on the tRNA convert PreQ1 to queuine (Q), resulting in the hypermodified nucleoside queuosine (7-(((4,5-cis-dihydroxy-2-cyclopenten-1-yl)amino)methyl)-7-deazaguanosine). The sequence is that of Queuine tRNA-ribosyltransferase from Herminiimonas arsenicoxydans.